A 368-amino-acid polypeptide reads, in one-letter code: Cyclic GMP-AMP synthase-like receptor (368 aa).

Residues serine 60 and 72–74 each bind ATP; that span reads EYD. Mg(2+) contacts are provided by glutamate 72, aspartate 74, and aspartate 190. Residues aspartate 190 and 229-236 each bind GTP; that span reads RASFYRQE. ATP-binding positions include 233 to 236, lysine 254, and 268 to 272; these read YRQE and SYFIK.

It belongs to the mab-21 family. It depends on Mg(2+) as a cofactor. Mn(2+) is required as a cofactor.

It carries out the reaction GTP + ATP = 3',2'-cGAMP + 2 diphosphate. The catalysed reaction is GTP + ATP = pppA(2'-5')pG + diphosphate. It catalyses the reaction pppA(2'-5')pG = 3',2'-cGAMP + diphosphate. With respect to regulation, the enzyme activity is specifically activated by double-stranded RNA (dsRNA). In terms of biological role, nucleotidyltransferase that catalyzes the formation of cyclic GMP-AMP (3',2'-cGAMP) from ATP and GTP and plays a key role in innate immunity. Synthesizes 3',2'-cGAMP in a two-step reaction through production of the linear intermediate pppA(2'-5')pG. Acts as a key sensor of double-stranded RNA (dsRNA), the presence of dsRNA in the cytoplasm being a danger signal that triggers the immune responses. Directly binds dsRNA, activating the nucleotidyltransferase activity, leading to synthesis of 3',2'-cGAMP, a second messenger that binds to and activates Sting, thereby triggering the antiviral immune response via activation of the NF-kappa-B transcription factor Rel (Relish). The sequence is that of Cyclic GMP-AMP synthase-like receptor from Lucilia cuprina (Green bottle fly).